We begin with the raw amino-acid sequence, 386 residues long: 26S proteasome non-ATPase regulatory subunit 13 homolog A (386 aa).

The residue at position 2 (Ala-2) is an N-acetylalanine. The PCI domain occupies Glu-173–Pro-347.

It belongs to the proteasome subunit S11 family. As to quaternary structure, component of the 19S regulatory particle (RP/PA700) lid subcomplex of the 26S proteasome. The 26S proteasome is composed of a core protease (CP), known as the 20S proteasome, capped at one or both ends by the 19S regulatory particle (RP/PA700). The RP/PA700 complex is composed of at least 17 different subunits in two subcomplexes, the base and the lid, which form the portions proximal and distal to the 20S proteolytic core, respectively. In terms of tissue distribution, ubiquitous with highest expression in flowers.

Its function is as follows. Acts as a regulatory subunit of the 26S proteasome which is involved in the ATP-dependent degradation of ubiquitinated proteins. The chain is 26S proteasome non-ATPase regulatory subunit 13 homolog A (RPN9A) from Arabidopsis thaliana (Mouse-ear cress).